The primary structure comprises 202 residues: Holliday junction branch migration complex subunit RuvA (202 aa).

The tract at residues 1-64 (MIGRLRGTLA…EDAQLLYGFA (64 aa)) is domain I. A domain II region spans residues 65–143 (SKRERDFFRE…AWEAVPSMFA (79 aa)). The segment at 144-154 (LVPNQPDAPAP) is flexible linker. A domain III region spans residues 154 to 202 (PVASAESDAVSALISLGYKPQEASKAVSAIKDKGLSSEDMIRRALKGMI).

The protein belongs to the RuvA family. In terms of assembly, homotetramer. Forms an RuvA(8)-RuvB(12)-Holliday junction (HJ) complex. HJ DNA is sandwiched between 2 RuvA tetramers; dsDNA enters through RuvA and exits via RuvB. An RuvB hexamer assembles on each DNA strand where it exits the tetramer. Each RuvB hexamer is contacted by two RuvA subunits (via domain III) on 2 adjacent RuvB subunits; this complex drives branch migration. In the full resolvosome a probable DNA-RuvA(4)-RuvB(12)-RuvC(2) complex forms which resolves the HJ.

It localises to the cytoplasm. Its function is as follows. The RuvA-RuvB-RuvC complex processes Holliday junction (HJ) DNA during genetic recombination and DNA repair, while the RuvA-RuvB complex plays an important role in the rescue of blocked DNA replication forks via replication fork reversal (RFR). RuvA specifically binds to HJ cruciform DNA, conferring on it an open structure. The RuvB hexamer acts as an ATP-dependent pump, pulling dsDNA into and through the RuvAB complex. HJ branch migration allows RuvC to scan DNA until it finds its consensus sequence, where it cleaves and resolves the cruciform DNA. The sequence is that of Holliday junction branch migration complex subunit RuvA from Pseudomonas fluorescens (strain ATCC BAA-477 / NRRL B-23932 / Pf-5).